We begin with the raw amino-acid sequence, 413 residues long: Multifunctional CCA protein (413 aa).

G8 and R11 together coordinate ATP. CTP is bound by residues G8 and R11. D21 and D23 together coordinate Mg(2+). Residues R91, R137, and R140 each contribute to the ATP site. CTP is bound by residues R91, R137, and R140. The region spanning 228–329 (TGVHTLMTLS…VKLFDAIDAW (102 aa)) is the HD domain.

Belongs to the tRNA nucleotidyltransferase/poly(A) polymerase family. Bacterial CCA-adding enzyme type 1 subfamily. In terms of assembly, monomer. Can also form homodimers and oligomers. Mg(2+) serves as cofactor. It depends on Ni(2+) as a cofactor.

The catalysed reaction is a tRNA precursor + 2 CTP + ATP = a tRNA with a 3' CCA end + 3 diphosphate. It catalyses the reaction a tRNA with a 3' CCA end + 2 CTP + ATP = a tRNA with a 3' CCACCA end + 3 diphosphate. Catalyzes the addition and repair of the essential 3'-terminal CCA sequence in tRNAs without using a nucleic acid template. Adds these three nucleotides in the order of C, C, and A to the tRNA nucleotide-73, using CTP and ATP as substrates and producing inorganic pyrophosphate. tRNA 3'-terminal CCA addition is required both for tRNA processing and repair. Also involved in tRNA surveillance by mediating tandem CCA addition to generate a CCACCA at the 3' terminus of unstable tRNAs. While stable tRNAs receive only 3'-terminal CCA, unstable tRNAs are marked with CCACCA and rapidly degraded. This chain is Multifunctional CCA protein, found in Salmonella paratyphi A (strain ATCC 9150 / SARB42).